Consider the following 190-residue polypeptide: uncharacterized protein (190 aa).

A helical membrane pass occupies residues 1–21 (MLVMSITFSFVAVALLVYFYV). Over residues 103 to 114 (REEVCARPEHRS) the composition is skewed to basic and acidic residues. Positions 103–130 (REEVCARPEHRSAPSRAGSSAAKPTPTK) are disordered.

It to B.burgdorferi BB0265.

It localises to the membrane. This is an uncharacterized protein from Treponema pallidum (strain Nichols).